The following is a 101-amino-acid chain: Large ribosomal subunit protein bL9m (101 aa).

The N-terminal 32 residues, 1-32 (MSIMKPTTRFFRFNSLELAVSPFQRIYGQLRF), are a transit peptide targeting the mitochondrion.

It belongs to the bacterial ribosomal protein bL9 family. Component of the mitochondrial large ribosomal subunit (mt-LSU). Mature yeast 74S mitochondrial ribosomes consist of a small (37S) and a large (54S) subunit. The 37S small subunit contains a 15S ribosomal RNA (15S mt-rRNA) and at least 32 different proteins. The 54S large subunit contains a 21S rRNA (21S mt-rRNA) and at least 45 different proteins.

The protein resides in the mitochondrion. Functionally, component of the mitochondrial ribosome (mitoribosome), a dedicated translation machinery responsible for the synthesis of mitochondrial genome-encoded proteins, including at least some of the essential transmembrane subunits of the mitochondrial respiratory chain. The mitoribosomes are attached to the mitochondrial inner membrane and translation products are cotranslationally integrated into the membrane. In Schizosaccharomyces pombe (strain 972 / ATCC 24843) (Fission yeast), this protein is Large ribosomal subunit protein bL9m.